Reading from the N-terminus, the 252-residue chain is DNA repair protein RecO (252 aa).

It belongs to the RecO family.

In terms of biological role, involved in DNA repair and RecF pathway recombination. This chain is DNA repair protein RecO, found in Rhodospirillum rubrum (strain ATCC 11170 / ATH 1.1.1 / DSM 467 / LMG 4362 / NCIMB 8255 / S1).